The primary structure comprises 161 residues: Type II secretion system protein M (161 aa).

The Cytoplasmic portion of the chain corresponds to 1-16 (MNELRRRWQVMSQRER). Residues 17-37 (LMALACGGLVVLCLLYYLIWA) traverse the membrane as a helical segment. The Periplasmic segment spans residues 38-161 (PWQESVRQWQ…VTRLSLERVL (124 aa)).

Belongs to the GSP M family. In terms of assembly, type II secretion system is composed of four main components: the outer membrane complex, the inner membrane complex, the cytoplasmic secretion ATPase and the periplasm-spanning pseudopilus. Forms homodimers. Interacts with OutL/GspL. Interacts with OutE/GspE and OutF/GspF.

It is found in the cell inner membrane. Its function is as follows. Inner membrane component of the type II secretion system required for the energy-dependent secretion of extracellular factors such as proteases and toxins from the periplasm. Plays a role in the complex assembly and recruits OutL resulting in a stable complex in the inner membrane. Provides thus a link between the energy-providing OutE protein in the cytoplasm and the rest of the T2SS machinery. This Dickeya chrysanthemi (Pectobacterium chrysanthemi) protein is Type II secretion system protein M (outM).